The sequence spans 718 residues: Quinohemoprotein alcohol dehydrogenase ADH-IIG (718 aa).

Positions 1-29 (MRQTGLASLPLKSLAVAVLLSLAGTPALA) are cleaved as a signal peptide. Position 92 (Glu-92) interacts with pyrroloquinoline quinone. A disulfide bond links Cys-138 and Cys-139. Residues Arg-144, Thr-189, and 205–206 (GA) contribute to the pyrroloquinoline quinone site. Glu-207 contacts Ca(2+). Residue Thr-264 coordinates pyrroloquinoline quinone. 2 residues coordinate Ca(2+): Asn-284 and Asp-329. Residue Asp-329 is the Proton acceptor of the active site. Lys-356 serves as a coordination point for pyrroloquinoline quinone. Trp-415 lines the substrate pocket. Residues 419–420 (DW) and Ala-571 each bind pyrroloquinoline quinone. The 78-residue stretch at 622 to 699 (ASIEAGAKLY…QIHQYLIKRA (78 aa)) folds into the Cytochrome c domain. Heme c contacts are provided by Cys-635, Cys-638, His-639, and Met-676.

Belongs to the bacterial PQQ dehydrogenase family. As to quaternary structure, monomer. Requires pyrroloquinoline quinone as cofactor. Ca(2+) is required as a cofactor. Heme c serves as cofactor.

It localises to the periplasm. The catalysed reaction is 2 oxidized [azurin] + a primary alcohol = 2 reduced [azurin] + an aldehyde + 2 H(+). Its activity is regulated as follows. Exhibits higher affinity for 1-butanol compared to 1,2-propanediol but inhibited by 10 mM 1-butanol. Its function is as follows. Catalyzes the dye-linked oxidation of primary alcohols to the corresponding aldehydes and the (subsequent) oxidation of the aldehydes to carboxylic acids. Active with primary alcohols, glycerol, 1,2-propanediol, 1,3-propanediol but not with methanol or sugar alcohols such as D-sorbitol. The chain is Quinohemoprotein alcohol dehydrogenase ADH-IIG from Pseudomonas putida (Arthrobacter siderocapsulatus).